The sequence spans 35 residues: Photosystem II reaction center protein M (35 aa).

A helical membrane pass occupies residues 5-25 (ILAFIATALFIIIPTAFLLIL).

Belongs to the PsbM family. As to quaternary structure, PSII is composed of 1 copy each of membrane proteins PsbA, PsbB, PsbC, PsbD, PsbE, PsbF, PsbH, PsbI, PsbJ, PsbK, PsbL, PsbM, PsbT, PsbX, PsbY, PsbZ, Psb30/Ycf12, at least 3 peripheral proteins of the oxygen-evolving complex and a large number of cofactors. It forms dimeric complexes.

It is found in the plastid. Its subcellular location is the chloroplast thylakoid membrane. One of the components of the core complex of photosystem II (PSII). PSII is a light-driven water:plastoquinone oxidoreductase that uses light energy to abstract electrons from H(2)O, generating O(2) and a proton gradient subsequently used for ATP formation. It consists of a core antenna complex that captures photons, and an electron transfer chain that converts photonic excitation into a charge separation. This subunit is found at the monomer-monomer interface. The polypeptide is Photosystem II reaction center protein M (Chara vulgaris (Common stonewort)).